We begin with the raw amino-acid sequence, 459 residues long: UDP-N-acetylglucosamine 1-carboxyvinyltransferase (459 aa).

40 to 41 (KN) lines the phosphoenolpyruvate pocket. Arg111 provides a ligand contact to UDP-N-acetyl-alpha-D-glucosamine. The Proton donor role is filled by Cys135. Cys135 is subject to 2-(S-cysteinyl)pyruvic acid O-phosphothioketal. Residues 140-144 (RPVDL), Asp324, and Val346 each bind UDP-N-acetyl-alpha-D-glucosamine. The tract at residues 437–459 (PSAPPSEVSSAVAAGPDAAAAPV) is disordered. Over residues 441–459 (PSEVSSAVAAGPDAAAAPV) the composition is skewed to low complexity.

Belongs to the EPSP synthase family. MurA subfamily.

Its subcellular location is the cytoplasm. It carries out the reaction phosphoenolpyruvate + UDP-N-acetyl-alpha-D-glucosamine = UDP-N-acetyl-3-O-(1-carboxyvinyl)-alpha-D-glucosamine + phosphate. It functions in the pathway cell wall biogenesis; peptidoglycan biosynthesis. Cell wall formation. Adds enolpyruvyl to UDP-N-acetylglucosamine. The sequence is that of UDP-N-acetylglucosamine 1-carboxyvinyltransferase from Gloeobacter violaceus (strain ATCC 29082 / PCC 7421).